We begin with the raw amino-acid sequence, 179 residues long: Peptide deformylase 2 (179 aa).

2 residues coordinate Fe cation: C102 and H144. Residue E145 is part of the active site. Residue H148 coordinates Fe cation.

It belongs to the polypeptide deformylase family. The cofactor is Fe(2+).

The enzyme catalyses N-terminal N-formyl-L-methionyl-[peptide] + H2O = N-terminal L-methionyl-[peptide] + formate. Functionally, removes the formyl group from the N-terminal Met of newly synthesized proteins. Requires at least a dipeptide for an efficient rate of reaction. N-terminal L-methionine is a prerequisite for activity but the enzyme has broad specificity at other positions. The polypeptide is Peptide deformylase 2 (Nostoc sp. (strain PCC 7120 / SAG 25.82 / UTEX 2576)).